Consider the following 257-residue polypeptide: 1-(5-phosphoribosyl)-5-[(5-phosphoribosylamino)methylideneamino] imidazole-4-carboxamide isomerase (257 aa).

Belongs to the HisA/HisF family.

The protein resides in the cytoplasm. The enzyme catalyses 1-(5-phospho-beta-D-ribosyl)-5-[(5-phospho-beta-D-ribosylamino)methylideneamino]imidazole-4-carboxamide = 5-[(5-phospho-1-deoxy-D-ribulos-1-ylimino)methylamino]-1-(5-phospho-beta-D-ribosyl)imidazole-4-carboxamide. It participates in amino-acid biosynthesis; L-histidine biosynthesis; L-histidine from 5-phospho-alpha-D-ribose 1-diphosphate: step 4/9. The protein is 1-(5-phosphoribosyl)-5-[(5-phosphoribosylamino)methylideneamino] imidazole-4-carboxamide isomerase (his-7) of Neurospora crassa (strain ATCC 24698 / 74-OR23-1A / CBS 708.71 / DSM 1257 / FGSC 987).